Consider the following 202-residue polypeptide: Small ribosomal subunit protein uS4 (202 aa).

Residues 93 to 155 (RRLDNVVRRV…ENLKNLYRGV (63 aa)) form the S4 RNA-binding domain.

Belongs to the universal ribosomal protein uS4 family. Part of the 30S ribosomal subunit. Contacts protein S5. The interaction surface between S4 and S5 is involved in control of translational fidelity.

In terms of biological role, one of the primary rRNA binding proteins, it binds directly to 16S rRNA where it nucleates assembly of the body of the 30S subunit. Its function is as follows. With S5 and S12 plays an important role in translational accuracy. The protein is Small ribosomal subunit protein uS4 of Rhodopirellula baltica (strain DSM 10527 / NCIMB 13988 / SH1).